Reading from the N-terminus, the 27-residue chain is Ranatuerin-2Cb (27 aa).

Cysteines 20 and 25 form a disulfide.

Expressed by the skin glands.

It localises to the secreted. Its function is as follows. Antibacterial activity against Gram-positive bacterium S.aureus (MIC=40 uM) and Gram-negative bacterium E.coli (MIC=2 uM). Has activity against C.albicans (MIC=46 uM). The chain is Ranatuerin-2Cb from Lithobates clamitans (Green frog).